The primary structure comprises 206 residues: Probable nicotinate-nucleotide adenylyltransferase (206 aa).

This sequence belongs to the NadD family.

It catalyses the reaction nicotinate beta-D-ribonucleotide + ATP + H(+) = deamido-NAD(+) + diphosphate. It participates in cofactor biosynthesis; NAD(+) biosynthesis; deamido-NAD(+) from nicotinate D-ribonucleotide: step 1/1. Its function is as follows. Catalyzes the reversible adenylation of nicotinate mononucleotide (NaMN) to nicotinic acid adenine dinucleotide (NaAD). In Paenarthrobacter aurescens (strain TC1), this protein is Probable nicotinate-nucleotide adenylyltransferase.